The chain runs to 163 residues: MNIIEQFEKEQIEKLLEQRGVPQFSPGDTLRVHVKVIEGNRQRVQVYEGVCIARRNAALNSSFTVRKISFGEGVERIFPLYAPTIDRIEVVRRGKVRRAKLYYLRGRQGRSARIIEDTTATQQALAVEREISQERKASGKDQASKPEVRPQGKKPAPKPKAKK.

The span at 131 to 150 (ISQERKASGKDQASKPEVRP) shows a compositional bias: basic and acidic residues. The disordered stretch occupies residues 131-163 (ISQERKASGKDQASKPEVRPQGKKPAPKPKAKK). Residues 151 to 163 (QGKKPAPKPKAKK) are compositionally biased toward basic residues.

It belongs to the bacterial ribosomal protein bL19 family.

Functionally, this protein is located at the 30S-50S ribosomal subunit interface and may play a role in the structure and function of the aminoacyl-tRNA binding site. This is Large ribosomal subunit protein bL19 from Rhodospirillum rubrum (strain ATCC 11170 / ATH 1.1.1 / DSM 467 / LMG 4362 / NCIMB 8255 / S1).